We begin with the raw amino-acid sequence, 451 residues long: UPF0761 membrane protein Hhal_0704 (451 aa).

Helical transmembrane passes span 66–86 (LLAIVPLMTIGFSVLAAFPVF), 122–142 (ELTAVGIAGLTVTALLLLNTI), 162–182 (FMVYWTVLTMGPLLLGVSVAS), 204–224 (LLNLAPFVVQAIVFSLIYSLV), 228–248 (SVPVLHAVIGGVVASGLFELA), and 268–288 (ALAALPIFLVWLYISWLVILI).

This sequence belongs to the UPF0761 family.

It is found in the cell inner membrane. This is UPF0761 membrane protein Hhal_0704 from Halorhodospira halophila (strain DSM 244 / SL1) (Ectothiorhodospira halophila (strain DSM 244 / SL1)).